The chain runs to 166 residues: Cofilin-2 (166 aa).

Ala2 is subject to N-acetylalanine. Ser3 is subject to Phosphoserine. The 150-residue stretch at 4 to 153 folds into the ADF-H domain; that stretch reads GVTVNDEVIK…KDRSTLGEKL (150 aa). Phosphothreonine is present on Thr6. The Nuclear localization signal motif lies at 30–34; sequence KKRKK.

Belongs to the actin-binding proteins ADF family. The phosphorylation of Ser-24 may prevent recognition of the nuclear localization signal.

Its subcellular location is the nucleus matrix. It is found in the cytoplasm. The protein resides in the cytoskeleton. Controls reversibly actin polymerization and depolymerization in a pH-sensitive manner. It has the ability to bind G- and F-actin in a 1:1 ratio of cofilin to actin. It is the major component of intranuclear and cytoplasmic actin rods. This is Cofilin-2 (CFL2) from Bos taurus (Bovine).